Reading from the N-terminus, the 154-residue chain is Deoxyuridine 5'-triphosphate nucleotidohydrolase (154 aa).

Residues 64 to 66 (RSG), Asn-77, 81 to 83 (TVD), and Lys-91 contribute to the substrate site.

This sequence belongs to the dUTPase family. As to quaternary structure, homotrimer. The cofactor is Mg(2+).

The enzyme catalyses dUTP + H2O = dUMP + diphosphate + H(+). Its pathway is pyrimidine metabolism; dUMP biosynthesis; dUMP from dCTP (dUTP route): step 2/2. Functionally, this enzyme is involved in nucleotide metabolism: it produces dUMP, the immediate precursor of thymidine nucleotides and it decreases the intracellular concentration of dUTP so that uracil cannot be incorporated into DNA. This is Deoxyuridine 5'-triphosphate nucleotidohydrolase from Mycolicibacterium gilvum (strain PYR-GCK) (Mycobacterium gilvum (strain PYR-GCK)).